A 207-amino-acid chain; its full sequence is Octanoyltransferase (207 aa).

The region spanning 27-203 is the BPL/LPL catalytic domain; sequence ADTEDELWVV…HLETQFTPKA (177 aa). Substrate is bound by residues 66–73, 133–135, and 146–148; these read RGGQITYH, SLG, and GLA. C164 functions as the Acyl-thioester intermediate in the catalytic mechanism.

Belongs to the LipB family.

It localises to the cytoplasm. It catalyses the reaction octanoyl-[ACP] + L-lysyl-[protein] = N(6)-octanoyl-L-lysyl-[protein] + holo-[ACP] + H(+). It functions in the pathway protein modification; protein lipoylation via endogenous pathway; protein N(6)-(lipoyl)lysine from octanoyl-[acyl-carrier-protein]: step 1/2. Catalyzes the transfer of endogenously produced octanoic acid from octanoyl-acyl-carrier-protein onto the lipoyl domains of lipoate-dependent enzymes. Lipoyl-ACP can also act as a substrate although octanoyl-ACP is likely to be the physiological substrate. The sequence is that of Octanoyltransferase from Neisseria meningitidis serogroup B (strain ATCC BAA-335 / MC58).